Consider the following 316-residue polypeptide: Transcription initiation factor IIB (316 aa).

A TFIIB-type zinc finger spans residues 11–42; that stretch reads PRVTCPNHPDAILVEDYRAGDMICPECGLVVG. 4 residues coordinate Zn(2+): Cys-15, His-18, Cys-34, and Cys-37. Phosphoserine occurs at positions 70, 76, and 92. A run of 2 repeats spans residues 124–200 and 218–294. Lys-152, Arg-154, Lys-189, and Lys-196 together coordinate DNA. The segment at 189–193 is core promoter DNA-binding; that stretch reads KEIGR. Lys-238 carries the N6-acetyllysine; by autocatalysis modification. The necessary for TATA box-bound complex TBP formation stretch occupies residues 244 to 316; the sequence is LVPGRSPISV…DTPVDKLPQL (73 aa). DNA is bound at residue Arg-248. The core promoter DNA-binding stretch occupies residues 249-252; the sequence is SPIS. DNA contacts are provided by Lys-272, Ala-281, Thr-284, Arg-286, and Arg-290. Residues 283 to 286 form a core promoter DNA-binding region; it reads VTIR.

This sequence belongs to the TFIIB family. Found in a ternary complex with TATA box-bound TBP. Part of a TFIID-containing RNA polymerase II pre-initiation complex (PIC) that is composed of TBP and at least GTF2A1, GTF2A2, GTF2E1, GTF2E2, GTF2F1, GTF2H2, GTF2H3, GTF2H4, GTF2H5, GTF2B, TCEA1, ERCC2, ERCC3, TAF1, TAF2, TAF3, TAF4, TAF5, TAF6, TAF7, TAF8, TAF9, TAF10, TAF11, TAF12 and TAF13. Associates with TFIID-TFIIA (DA complex) to form TFIID-TFIIA-TFIIB (DAB complex), which is then recognized by RNA polymerase II (Pol II). Found in a RNA polymerase II initiation complex. Interacts (via C-terminus) with TBP; this interaction with TATA box-bound TBP guides Pol II into the PIC. Interacts (via N-terminus) with Pol II. Interacts (via C-terminus) with SSU72; this interaction is inhibited by SYMPK. Interacts with NR2F1; this interaction is direct. Interacts with PGR. Interacts with ESR1. Interacts with GTF2F1 (via C-terminus and preferentially via acetylated form); this interaction prevents binding of GTF2B to GTF2F2. Interacts with GTF2F2 (via N-terminus); this interaction is inhibited in presence of GTF2F1. Interacts with the transcription elongation factor TCEA2. Interacts with HSF1 (via transactivation domain). Interacts with GPBP1. Post-translationally, acetylated. Autoacetylated; autoacetylation at Lys-238 stimulates transcription activation.

Its subcellular location is the nucleus. The protein localises to the chromosome. It carries out the reaction L-lysyl-[protein] + acetyl-CoA = N(6)-acetyl-L-lysyl-[protein] + CoA + H(+). Functionally, general transcription factor that plays a role in transcription initiation by RNA polymerase II (Pol II). Involved in the pre-initiation complex (PIC) formation and Pol II recruitment at promoter DNA. Together with the TATA box-bound TBP forms the core initiation complex and provides a bridge between TBP and the Pol II-TFIIF complex. Released from the PIC early following the onset of transcription during the initiation and elongation transition and reassociates with TBP during the next transcription cycle. Associates with chromatin to core promoter-specific regions. Binds to two distinct DNA core promoter consensus sequence elements in a TBP-independent manner; these IIB-recognition elements (BREs) are localized immediately upstream (BREu), 5'-[GC][GC][GA]CGCC-3', and downstream (BREd), 5'-[GA]T[TGA][TG][GT][TG][TG]-3', of the TATA box element. Modulates transcription start site selection. Also exhibits autoacetyltransferase activity that contributes to the activated transcription. This chain is Transcription initiation factor IIB, found in Pongo abelii (Sumatran orangutan).